The following is a 286-amino-acid chain: Elongation factor Ts (286 aa).

The interval 82-85 is involved in Mg(2+) ion dislocation from EF-Tu; the sequence is TDFV. The interval 212–286 is disordered; that stretch reads VAAQTGQKVE…SPSKKGKKKK (75 aa). Polar residues predominate over residues 215–227; sequence QTGQKVEQPQAAQ. Residues 253–269 are compositionally biased toward low complexity; the sequence is ETDSPAAETTTEPPKTT.

This sequence belongs to the EF-Ts family.

It is found in the cytoplasm. In terms of biological role, associates with the EF-Tu.GDP complex and induces the exchange of GDP to GTP. It remains bound to the aminoacyl-tRNA.EF-Tu.GTP complex up to the GTP hydrolysis stage on the ribosome. This Gloeothece citriformis (strain PCC 7424) (Cyanothece sp. (strain PCC 7424)) protein is Elongation factor Ts.